The following is a 235-amino-acid chain: Thiamine import ATP-binding protein ThiQ (235 aa).

In terms of domain architecture, ABC transporter spans 2 to 230; that stretch reads LKLENLTYRY…TVPEAAILGM (229 aa). An ATP-binding site is contributed by 32 to 39; that stretch reads GPSGAGKS.

Belongs to the ABC transporter superfamily. Thiamine importer (TC 3.A.1.19.1) family. In terms of assembly, the complex is composed of two ATP-binding proteins (ThiQ), two transmembrane proteins (ThiP) and a solute-binding protein (ThiB).

The protein localises to the cell inner membrane. It carries out the reaction thiamine(out) + ATP + H2O = thiamine(in) + ADP + phosphate + H(+). Part of the ABC transporter complex ThiBPQ involved in thiamine import. Responsible for energy coupling to the transport system. This chain is Thiamine import ATP-binding protein ThiQ, found in Photorhabdus laumondii subsp. laumondii (strain DSM 15139 / CIP 105565 / TT01) (Photorhabdus luminescens subsp. laumondii).